We begin with the raw amino-acid sequence, 370 residues long: Aspartate beta-hydroxylase domain-containing protein 2 (370 aa).

Topologically, residues 1–57 (MVWALPRTSSPSCIAPSYKPDSGWIKMSAEWLIDWSCLLNGLRDLIAGCIQAVRDCN) are cytoplasmic. Residues 58-78 (SFALTTVICLLMLFAWYCYRV) form a helical membrane-spanning segment. Over 79–370 (GKDQPRSPFA…ALDSIFAPGR (292 aa)) the chain is Lumenal. N212 carries an N-linked (GlcNAc...) asparagine glycan. 2-oxoglutarate-binding residues include W229 and S273. Position 284 (H284) interacts with Fe cation. 293–295 (RCH) is a 2-oxoglutarate binding site. Residue H329 coordinates Fe cation. R342 serves as a coordination point for 2-oxoglutarate.

It belongs to the aspartyl/asparaginyl beta-hydroxylase family. Requires Fe cation as cofactor.

It localises to the membrane. Functionally, may function as 2-oxoglutarate-dependent dioxygenase. In Xenopus tropicalis (Western clawed frog), this protein is Aspartate beta-hydroxylase domain-containing protein 2 (asphd2).